The sequence spans 174 residues: CD164 sialomucin-like 2 protein (174 aa).

An N-terminal signal peptide occupies residues 1-29 (MEAPGPRALRTALCGGCCCLLLCAQLAVA). At 30 to 141 (GKGARGFGRG…AHSPGFDGAS (112 aa)) the chain is on the extracellular side. Residues asparagine 71 and asparagine 103 are each glycosylated (N-linked (GlcNAc...) asparagine). The helical transmembrane segment at 142–162 (FIGGVVLVLSLQAVAFFVLHF) threads the bilayer. The Cytoplasmic segment spans residues 163 to 174 (LKAKDSTYQTLI).

Belongs to the CD164 family.

The protein localises to the membrane. This Homo sapiens (Human) protein is CD164 sialomucin-like 2 protein (CD164L2).